Reading from the N-terminus, the 288-residue chain is Bifunctional protein FolD (288 aa).

NADP(+) contacts are provided by residues 166–168 (GAS) and Ile232.

Belongs to the tetrahydrofolate dehydrogenase/cyclohydrolase family. As to quaternary structure, homodimer.

The catalysed reaction is (6R)-5,10-methylene-5,6,7,8-tetrahydrofolate + NADP(+) = (6R)-5,10-methenyltetrahydrofolate + NADPH. It catalyses the reaction (6R)-5,10-methenyltetrahydrofolate + H2O = (6R)-10-formyltetrahydrofolate + H(+). The protein operates within one-carbon metabolism; tetrahydrofolate interconversion. Functionally, catalyzes the oxidation of 5,10-methylenetetrahydrofolate to 5,10-methenyltetrahydrofolate and then the hydrolysis of 5,10-methenyltetrahydrofolate to 10-formyltetrahydrofolate. The sequence is that of Bifunctional protein FolD from Erwinia tasmaniensis (strain DSM 17950 / CFBP 7177 / CIP 109463 / NCPPB 4357 / Et1/99).